The sequence spans 193 residues: 3-isopropylmalate dehydratase small subunit (193 aa).

Belongs to the LeuD family. LeuD type 1 subfamily. In terms of assembly, heterodimer of LeuC and LeuD.

The catalysed reaction is (2R,3S)-3-isopropylmalate = (2S)-2-isopropylmalate. Its pathway is amino-acid biosynthesis; L-leucine biosynthesis; L-leucine from 3-methyl-2-oxobutanoate: step 2/4. Functionally, catalyzes the isomerization between 2-isopropylmalate and 3-isopropylmalate, via the formation of 2-isopropylmaleate. The protein is 3-isopropylmalate dehydratase small subunit of Bacillus anthracis (strain CDC 684 / NRRL 3495).